The following is a 249-amino-acid chain: U2 small nuclear ribonucleoprotein A' (249 aa).

LRR repeat units lie at residues 20–41 (KERE…GATE), 43–64 (QFDT…PYLN), 65–87 (RLGT…GEFL), and 89–110 (KLHS…DPLA). Residues 123–161 (NNITKKANYRLYVIHKLKSLRVLDFIKIKAKERAEAASL) form the LRRCT domain.

This sequence belongs to the U2 small nuclear ribonucleoprotein A family.

It localises to the nucleus. The protein localises to the nucleus speckle. In terms of biological role, this protein is associated with sn-RNP U2. It helps the A' protein to bind stem loop IV of U2 snRNA. In Arabidopsis thaliana (Mouse-ear cress), this protein is U2 small nuclear ribonucleoprotein A'.